The sequence spans 216 residues: Somatotropin (216 aa).

The signal sequence occupies residues 1-26 (MAAGPRTSMLLAFALLCLPWTQEVGA). His45 contributes to the Zn(2+) binding site. Cys78 and Cys189 are oxidised to a cystine. Phosphoserine is present on Ser131. Position 198 (Glu198) interacts with Zn(2+). Cysteines 206 and 214 form a disulfide.

It belongs to the somatotropin/prolactin family.

The protein resides in the secreted. Its function is as follows. Plays an important role in growth control. Its major role in stimulating body growth is to stimulate the liver and other tissues to secrete IGF1. It stimulates both the differentiation and proliferation of myoblasts. It also stimulates amino acid uptake and protein synthesis in muscle and other tissues. This chain is Somatotropin (GH1), found in Delphinus delphis (Short-beaked common dolphin).